Here is a 251-residue protein sequence, read N- to C-terminus: uncharacterized protein (251 aa).

Its subcellular location is the mitochondrion. This is an uncharacterized protein from Arabidopsis thaliana (Mouse-ear cress).